Here is a 200-residue protein sequence, read N- to C-terminus: Cysteine dioxygenase type 1 (200 aa).

3 residues coordinate Fe cation: His-86, His-88, and His-140. Residues 93–157 constitute a cross-link (3'-(S-cysteinyl)-tyrosine (Cys-Tyr)); that stretch reads CFLKMLQGNL…TEPAVSLHLY (65 aa).

This sequence belongs to the cysteine dioxygenase family. In terms of assembly, monomer. Fe cation is required as a cofactor. Ni(2+) serves as cofactor. The cofactor is Zn(2+). The thioether cross-link between Cys-93 and Tyr-157 plays a structural role through stabilizing the Fe(2+) ion, and prevents the production of highly damaging free hydroxyl radicals by holding the oxygen radical via hydroxyl hydrogen.

The catalysed reaction is L-cysteine + O2 = 3-sulfino-L-alanine + H(+). The protein operates within organosulfur biosynthesis; taurine biosynthesis; hypotaurine from L-cysteine: step 1/2. Functionally, catalyzes the oxidation of cysteine to cysteine sulfinic acid with addition of molecular dioxygen. The protein is Cysteine dioxygenase type 1 (CDO1) of Bos taurus (Bovine).